A 289-amino-acid chain; its full sequence is Pantoate kinase (289 aa).

The protein belongs to the GHMP kinase family. PoK subfamily.

The catalysed reaction is (R)-pantoate + ATP = (R)-4-phosphopantoate + ADP + H(+). It functions in the pathway cofactor biosynthesis; coenzyme A biosynthesis. In terms of biological role, phosphorylates (R)-pantoate to form (R)-4-phosphopantoate in the CoA biosynthesis pathway. ATP is the best phosphate donor. Can be replaced with UTP, with lower efficiency. The polypeptide is Pantoate kinase (Methanospirillum hungatei JF-1 (strain ATCC 27890 / DSM 864 / NBRC 100397 / JF-1)).